The primary structure comprises 126 residues: 5-carboxymethyl-2-hydroxymuconate Delta-isomerase (126 aa).

Pro2 functions as the Proton acceptor; via imino nitrogen in the catalytic mechanism.

Homotrimer.

It catalyses the reaction (2E,4Z)-5-hydroxypenta-2,4-diene-1,2,5-tricarboxylate = (3E,5R)-5-carboxy-2-oxohept-3-enedioate. The protein operates within aromatic compound metabolism; 4-hydroxyphenylacetate degradation; pyruvate and succinate semialdehyde from 4-hydroxyphenylacetate: step 4/7. Its function is as follows. Transforms 5-carboxymethyl-2-hydroxy-muconic acid (CHM) into 5-oxo-pent-3-ene-1,2,5-tricarboxylic acid (OPET). This chain is 5-carboxymethyl-2-hydroxymuconate Delta-isomerase (hpcD), found in Escherichia coli.